Here is a 193-residue protein sequence, read N- to C-terminus: Glycerol-3-phosphate acyltransferase (193 aa).

4 consecutive transmembrane segments (helical) span residues 2–22, 76–96, 112–132, and 152–172; these read LIAL…GLIV, VPIH…FPVF, LLFY…VFLF, and CLFV…AFVI.

The protein belongs to the PlsY family. In terms of assembly, probably interacts with PlsX.

The protein resides in the cell membrane. It catalyses the reaction an acyl phosphate + sn-glycerol 3-phosphate = a 1-acyl-sn-glycero-3-phosphate + phosphate. Its pathway is lipid metabolism; phospholipid metabolism. In terms of biological role, catalyzes the transfer of an acyl group from acyl-phosphate (acyl-PO(4)) to glycerol-3-phosphate (G3P) to form lysophosphatidic acid (LPA). This enzyme utilizes acyl-phosphate as fatty acyl donor, but not acyl-CoA or acyl-ACP. This chain is Glycerol-3-phosphate acyltransferase, found in Bacillus velezensis (strain DSM 23117 / BGSC 10A6 / LMG 26770 / FZB42) (Bacillus amyloliquefaciens subsp. plantarum).